The primary structure comprises 285 residues: CCR4-NOT transcription complex subunit 7 (285 aa).

A divalent metal cation is bound by residues Asp-40, Glu-42, Asp-161, Asp-230, and Glu-278.

This sequence belongs to the CAF1 family. As to quaternary structure, component of the CCR4-NOT complex. Mn(2+) serves as cofactor. Requires Mg(2+) as cofactor. The cofactor is Co(2+).

It localises to the nucleus. It is found in the cytoplasm. The catalysed reaction is Exonucleolytic cleavage of poly(A) to 5'-AMP.. Has 3'-5' poly(A) exoribonuclease activity for synthetic poly(A) RNA substrate. Catalytic component of the CCR4-NOT complex which is one of the major cellular mRNA deadenylases and is linked to various cellular processes including bulk mRNA degradation, miRNA-mediated repression, translational repression during translational initiation and general transcription regulation. During miRNA-mediated repression the complex also seems to act as translational repressor during translational initiation. Additional complex functions may be a consequence of its influence on mRNA expression. The sequence is that of CCR4-NOT transcription complex subunit 7 (cnot7) from Xenopus tropicalis (Western clawed frog).